A 297-amino-acid chain; its full sequence is Probable endonuclease 4 (297 aa).

Residues His69, His110, Glu145, Asp179, His182, His214, Asp227, His229, and Glu259 each coordinate Zn(2+).

It belongs to the AP endonuclease 2 family. Zn(2+) is required as a cofactor.

The catalysed reaction is Endonucleolytic cleavage to 5'-phosphooligonucleotide end-products.. Its function is as follows. Endonuclease IV plays a role in DNA repair. It cleaves phosphodiester bonds at apurinic or apyrimidinic (AP) sites, generating a 3'-hydroxyl group and a 5'-terminal sugar phosphate. The chain is Probable endonuclease 4 from Bacillus licheniformis (strain ATCC 14580 / DSM 13 / JCM 2505 / CCUG 7422 / NBRC 12200 / NCIMB 9375 / NCTC 10341 / NRRL NRS-1264 / Gibson 46).